The primary structure comprises 349 residues: Isopentenyl-diphosphate delta-isomerase (349 aa).

A substrate-binding site is contributed by 6–7; it reads RK. FMN is bound by residues 62 to 64, Ser93, and Asn122; that span reads AMT. Gln152 contacts substrate. A Mg(2+)-binding site is contributed by Glu153. FMN-binding positions include Lys184, Thr214, 258–259, and 280–281; these read GG and AG.

It belongs to the IPP isomerase type 2 family. In terms of assembly, homooctamer. Dimer of tetramers. FMN serves as cofactor. It depends on NADPH as a cofactor. Requires Mg(2+) as cofactor.

Its subcellular location is the cytoplasm. It carries out the reaction isopentenyl diphosphate = dimethylallyl diphosphate. Involved in the biosynthesis of isoprenoids. Catalyzes the 1,3-allylic rearrangement of the homoallylic substrate isopentenyl (IPP) to its allylic isomer, dimethylallyl diphosphate (DMAPP). The chain is Isopentenyl-diphosphate delta-isomerase from Bacillus cytotoxicus (strain DSM 22905 / CIP 110041 / 391-98 / NVH 391-98).